We begin with the raw amino-acid sequence, 274 residues long: Copper chaperone for superoxide dismutase (274 aa).

In terms of domain architecture, HMA spans 11–74 (MCALEFTVQM…LLESTGRQAV (64 aa)). Cys22 and Cys25 together coordinate Cu cation. A Glycyl lysine isopeptide (Lys-Gly) (interchain with G-Cter in ubiquitin) cross-link involves residue Lys76. The superoxide dismutase-like stretch occupies residues 88 to 234 (AAVAIMEGSG…LACGIIARSA (147 aa)). Cys141 and Cys227 are oxidised to a cystine. Zn(2+) is bound by residues His147, His155, His164, and Asp167. Residues Lys189, Lys216, and Lys241 each participate in a glycyl lysine isopeptide (Lys-Gly) (interchain with G-Cter in ubiquitin) cross-link. Cu cation is bound by residues Cys244 and Cys246. At Ser267 the chain carries Phosphoserine.

This sequence in the C-terminal section; belongs to the Cu-Zn superoxide dismutase family. In terms of assembly, homodimer, and heterodimer with SOD1. Interacts with COMMD1. Interacts with XIAP/BIRC4. Interacts with SLC31A1(via C-terminal domain); this interaction is Cu(1+)-mediated. The heterodimer CCS:SOD1 interacts with SLC31A1; this heterotrimer is Cu(1+)-mediated and its maintenance is regulated through SOD1 activation. The cofactor is Cu(2+). Zn(2+) serves as cofactor. Post-translationally, ubiquitinion by XIAP/BIRC4 leads to enhancement of its chaperone activity toward its physiologic target, SOD1, rather than proteasomal degradation. XIAP/BIRC4 preferentially ubiquitinates at Lys-241.

It localises to the cytoplasm. In terms of biological role, delivers copper to copper zinc superoxide dismutase (SOD1). The chain is Copper chaperone for superoxide dismutase from Rattus norvegicus (Rat).